The following is a 1302-amino-acid chain: Vascular endothelial growth factor receptor kdr-like (1302 aa).

An N-terminal signal peptide occupies residues 1–28 (MTPLKTSVKAFFTLHVLFSCISHGLVEG). Topologically, residues 29–740 (SRLPDPQLLP…GEDGKPNIEV (712 aa)) are extracellular. Ig-like C2-type domains are found at residues 34-115 (PQLL…HEVS), 143-206 (DPYF…VDNA), 222-318 (KNLA…TKVI), 326-412 (NVTH…ISYK), 419-542 (PKIF…FYVD), 545-636 (PQPF…SALT), and 643-728 (PWLM…AVIT). 2 disulfides stabilise this stretch: C55–C104 and C150–C199. N69 and N97 each carry an N-linked (GlcNAc...) asparagine glycan. 17 N-linked (GlcNAc...) asparagine glycosylation sites follow: N242, N265, N291, N326, N370, N380, N408, N453, N466, N505, N517, N532, N607, N611, N630, N648, and N655. C243 and C302 are disulfide-bonded. C444 and C524 are disulfide-bonded. Residues C565 and C618 are joined by a disulfide bond. C664 and C712 are oxidised to a cystine. The helical transmembrane segment at 741 to 761 (IILVSTGAAATFLWIMLILFI) threads the bilayer. The Cytoplasmic portion of the chain corresponds to 762-1302 (RKLRKPSSAD…YVVRYSTPPV (541 aa)). One can recognise a Protein kinase domain in the interval 809 to 1139 (LRLGKTLGHG…ELVERLGDLL (331 aa)). ATP-binding positions include 815-823 (LGHGAFGKV) and K843. The active-site Proton acceptor is the D1003. Residues Y1029, Y1034, and Y1150 each carry the phosphotyrosine; by autocatalysis modification. 2 disordered regions span residues 1159–1179 (TKAD…PVSL) and 1266–1292 (PLVP…PDYN). Polar residues predominate over residues 1162–1176 (DPSNQSPTEETSTRP).

This sequence belongs to the protein kinase superfamily. Tyr protein kinase family. CSF-1/PDGF receptor subfamily. As to quaternary structure, interacts with isoform VEGF165 of vegfaa and isoform VEGF171 of vegfab. In terms of processing, phosphorylated and activated by vegfaa and vegfab. In terms of tissue distribution, first expressed in embryos between 5- and 7-somites. At 7 somites, expressed in discrete bilateral stripes both anteriorly and posteriorly, and in a transverse ectodermal stripe in the hindbrain. From 7-somites, expression seems to extend caudally from the head, and in both directions in the trunk region, until by 20-somites, expression is detected as a continuous band from the anterior head region to the tailbud. Concurrently, cells expressing kdrl in the mid- and posterior trunk regions converge medially. By 24 hours post-fertilization (hpf), expressed in all the endothelial cells lining the vasculature.

It is found in the cell membrane. The enzyme catalyses L-tyrosyl-[protein] + ATP = O-phospho-L-tyrosyl-[protein] + ADP + H(+). In terms of biological role, receptor for VEGF or VEGFC. Has a tyrosine-protein kinase activity. Combinations of multiple VEGF receptors are required for development of different blood vessel types in the embryo. Involved in angiogenesis, specifically in VEGF-induced sprouting of new blood vessels. Particularly involved in artery formation. Does not appear to be required for hematopoiesis. The sequence is that of Vascular endothelial growth factor receptor kdr-like (kdrl) from Danio rerio (Zebrafish).